The chain runs to 478 residues: JmjC domain-containing histone demethylation protein 1 (478 aa).

The segment at 6 to 70 (VKCHFCKKDD…HVESFKCTLH (65 aa)) adopts a PHD-type zinc-finger fold. Residues 242–401 (SHVESFKDGI…TQLNVVEIEH (160 aa)) form the JmjC domain. Thr-294 lines the substrate pocket. Positions 297 and 299 each coordinate Fe cation. A substrate-binding site is contributed by Lys-314. His-369 lines the Fe cation pocket.

It belongs to the JHDM1 histone demethylase family. The cofactor is Fe(2+).

It localises to the nucleus. It catalyses the reaction N(6),N(6)-dimethyl-L-lysyl(36)-[histone H3] + 2 2-oxoglutarate + 2 O2 = L-lysyl(36)-[histone H3] + 2 formaldehyde + 2 succinate + 2 CO2. Histone demethylase that specifically demethylates 'Lys-36' of histone H3, thereby playing a central role in histone code. This Kluyveromyces lactis (strain ATCC 8585 / CBS 2359 / DSM 70799 / NBRC 1267 / NRRL Y-1140 / WM37) (Yeast) protein is JmjC domain-containing histone demethylation protein 1 (JHD1).